The primary structure comprises 510 residues: Light-independent protochlorophyllide reductase subunit B (510 aa).

Residue Asp36 coordinates [4Fe-4S] cluster. Catalysis depends on Asp297, which acts as the Proton donor. 432-433 (GM) lines the substrate pocket.

The protein belongs to the ChlB/BchB/BchZ family. Protochlorophyllide reductase is composed of three subunits; ChlL, ChlN and ChlB. Forms a heterotetramer of two ChlB and two ChlN subunits. The cofactor is [4Fe-4S] cluster.

The protein resides in the plastid. The protein localises to the chloroplast. The catalysed reaction is chlorophyllide a + oxidized 2[4Fe-4S]-[ferredoxin] + 2 ADP + 2 phosphate = protochlorophyllide a + reduced 2[4Fe-4S]-[ferredoxin] + 2 ATP + 2 H2O. Its pathway is porphyrin-containing compound metabolism; chlorophyll biosynthesis (light-independent). Its function is as follows. Component of the dark-operative protochlorophyllide reductase (DPOR) that uses Mg-ATP and reduced ferredoxin to reduce ring D of protochlorophyllide (Pchlide) to form chlorophyllide a (Chlide). This reaction is light-independent. The NB-protein (ChlN-ChlB) is the catalytic component of the complex. The chain is Light-independent protochlorophyllide reductase subunit B from Pinus thunbergii (Japanese black pine).